The following is a 129-amino-acid chain: Large ribosomal subunit protein mL53 (129 aa).

The transit peptide at 1-50 (MREKLNLLAKLKSVVYKFDPLNPNTRSIRSFIPLTTCKRSRQLAPECSIS) directs the protein to the mitochondrion.

It belongs to the mitochondrion-specific ribosomal protein mL53 family.

It is found in the mitochondrion. The polypeptide is Large ribosomal subunit protein mL53 (mrpl53) (Dictyostelium discoideum (Social amoeba)).